Consider the following 186-residue polypeptide: ATP synthase subunit delta (186 aa).

This sequence belongs to the ATPase delta chain family. In terms of assembly, F-type ATPases have 2 components, F(1) - the catalytic core - and F(0) - the membrane proton channel. F(1) has five subunits: alpha(3), beta(3), gamma(1), delta(1), epsilon(1). F(0) has three main subunits: a(1), b(2) and c(10-14). The alpha and beta chains form an alternating ring which encloses part of the gamma chain. F(1) is attached to F(0) by a central stalk formed by the gamma and epsilon chains, while a peripheral stalk is formed by the delta and b chains.

It is found in the cell inner membrane. In terms of biological role, f(1)F(0) ATP synthase produces ATP from ADP in the presence of a proton or sodium gradient. F-type ATPases consist of two structural domains, F(1) containing the extramembraneous catalytic core and F(0) containing the membrane proton channel, linked together by a central stalk and a peripheral stalk. During catalysis, ATP synthesis in the catalytic domain of F(1) is coupled via a rotary mechanism of the central stalk subunits to proton translocation. Its function is as follows. This protein is part of the stalk that links CF(0) to CF(1). It either transmits conformational changes from CF(0) to CF(1) or is implicated in proton conduction. This is ATP synthase subunit delta from Ruegeria sp. (strain TM1040) (Silicibacter sp.).